A 59-amino-acid polypeptide reads, in one-letter code: ATP synthase subunit J, mitochondrial (59 aa).

A helical membrane pass occupies residues 9–25 (ILKVYWPFFVAGAAVYY).

It belongs to the ATPase j subunit family. In terms of assembly, F-type ATPases have 2 components, CF(1) - the catalytic core - and CF(0) - the membrane proton channel. In yeast, the dimeric form of ATP synthase consists of 17 polypeptides: alpha, beta, gamma, delta, epsilon, 4 (B), 5 (OSCP), 6 (A), 8, 9 (C), d, E (Tim11), f, g, h, i/j and k.

It is found in the mitochondrion membrane. Mitochondrial membrane ATP synthase (F(1)F(0) ATP synthase or Complex V) produces ATP from ADP in the presence of a proton gradient across the membrane which is generated by electron transport complexes of the respiratory chain. F-type ATPases consist of two structural domains, F(1) - containing the extramembraneous catalytic core and F(0) - containing the membrane proton channel, linked together by a central stalk and a peripheral stalk. During catalysis, ATP synthesis in the catalytic domain of F(1) is coupled via a rotary mechanism of the central stalk subunits to proton translocation. Part of the complex F(0) domain. Minor subunit located with subunit a in the membrane. The polypeptide is ATP synthase subunit J, mitochondrial (ATP18) (Saccharomyces cerevisiae (strain ATCC 204508 / S288c) (Baker's yeast)).